The primary structure comprises 86 residues: Small ribosomal subunit protein bS16 (86 aa).

It belongs to the bacterial ribosomal protein bS16 family.

This Borreliella burgdorferi (strain ATCC 35210 / DSM 4680 / CIP 102532 / B31) (Borrelia burgdorferi) protein is Small ribosomal subunit protein bS16.